Consider the following 201-residue polypeptide: Small ribosomal subunit protein uS4 (201 aa).

One can recognise an S4 RNA-binding domain in the interval 92–155; sequence RRLDAVVYAL…QKLDIIQESV (64 aa).

The protein belongs to the universal ribosomal protein uS4 family. As to quaternary structure, part of the 30S ribosomal subunit. Contacts protein S5. The interaction surface between S4 and S5 is involved in control of translational fidelity.

One of the primary rRNA binding proteins, it binds directly to 16S rRNA where it nucleates assembly of the body of the 30S subunit. Functionally, with S5 and S12 plays an important role in translational accuracy. This is Small ribosomal subunit protein uS4 from Staphylococcus carnosus (strain TM300).